The sequence spans 436 residues: uncharacterized protein (436 aa).

Positions 1-18 (MMKRFVALSMAIFSLSFA) are cleaved as a signal peptide.

This is an uncharacterized protein from Aquifex aeolicus (strain VF5).